A 246-amino-acid chain; its full sequence is MADS-box protein EJ2 (246 aa).

The 61-residue stretch at 1 to 61 (MGRGRVELKR…GKLYEFCSTS (61 aa)) folds into the MADS-box domain. One can recognise a K-box domain in the interval 87 to 177 (TQNNYHEYLR…RRKLEESVAG (91 aa)).

Its subcellular location is the nucleus. Functionally, MADS-box transcription factor that acts redundantly with J2 to control meristem maturation and inflorescence architecture. This chain is MADS-box protein EJ2, found in Solanum lycopersicum (Tomato).